The chain runs to 449 residues: CCA-adding enzyme (449 aa).

Ser53 and Lys56 together coordinate ATP. Residues Ser53 and Lys56 each coordinate CTP. The Mg(2+) site is built by Asp65, Asp67, and Asp119. ATP is bound by residues His142, Lys161, and Tyr170. CTP contacts are provided by His142, Lys161, and Tyr170.

Belongs to the tRNA nucleotidyltransferase/poly(A) polymerase family. Archaeal CCA-adding enzyme subfamily. As to quaternary structure, homodimer. Mg(2+) is required as a cofactor.

It catalyses the reaction a tRNA precursor + 2 CTP + ATP = a tRNA with a 3' CCA end + 3 diphosphate. The catalysed reaction is a tRNA with a 3' CCA end + 2 CTP + ATP = a tRNA with a 3' CCACCA end + 3 diphosphate. Catalyzes the addition and repair of the essential 3'-terminal CCA sequence in tRNAs without using a nucleic acid template. Adds these three nucleotides in the order of C, C, and A to the tRNA nucleotide-73, using CTP and ATP as substrates and producing inorganic pyrophosphate. tRNA 3'-terminal CCA addition is required both for tRNA processing and repair. Also involved in tRNA surveillance by mediating tandem CCA addition to generate a CCACCA at the 3' terminus of unstable tRNAs. While stable tRNAs receive only 3'-terminal CCA, unstable tRNAs are marked with CCACCA and rapidly degraded. The sequence is that of CCA-adding enzyme from Pyrococcus horikoshii (strain ATCC 700860 / DSM 12428 / JCM 9974 / NBRC 100139 / OT-3).